Here is a 1106-residue protein sequence, read N- to C-terminus: Carbamoyl phosphate synthase large chain (1106 aa).

A carboxyphosphate synthetic domain region spans residues 1–401 (MPKRNDLNKV…AFLKALRSLE (401 aa)). Positions 129, 169, 175, 176, 208, 210, 215, 241, 242, 243, 284, and 298 each coordinate ATP. In terms of domain architecture, ATP-grasp 1 spans 133-327 (KTTMNDIGEP…IARVASKIAI (195 aa)). Mg(2+) contacts are provided by Gln-284, Glu-298, and Asn-300. Residues Gln-284, Glu-298, and Asn-300 each coordinate Mn(2+). The interval 402–577 (IDLDDLHQSI…YSAYNEENEA (176 aa)) is oligomerization domain. The carbamoyl phosphate synthetic domain stretch occupies residues 578–964 (IPPSEPTHDK…ALYKAMLASG (387 aa)). One can recognise an ATP-grasp 2 domain in the interval 706 to 896 (DQLLNKLGID…MVKIATKAMM (191 aa)). ATP contacts are provided by Arg-742, Gln-781, Leu-783, Glu-787, Gly-812, Val-813, His-814, Ser-815, Gln-855, and Glu-867. The Mg(2+) site is built by Gln-855, Glu-867, and Asn-869. Residues Gln-855, Glu-867, and Asn-869 each contribute to the Mn(2+) site. One can recognise an MGS-like domain in the interval 965 to 1106 (FSINLNGGVL…LQDYLKELSN (142 aa)). The interval 965-1106 (FSINLNGGVL…LQDYLKELSN (142 aa)) is allosteric domain.

This sequence belongs to the CarB family. Composed of two chains; the small (or glutamine) chain promotes the hydrolysis of glutamine to ammonia, which is used by the large (or ammonia) chain to synthesize carbamoyl phosphate. Tetramer of heterodimers (alpha,beta)4. Mg(2+) serves as cofactor. Requires Mn(2+) as cofactor.

The enzyme catalyses hydrogencarbonate + L-glutamine + 2 ATP + H2O = carbamoyl phosphate + L-glutamate + 2 ADP + phosphate + 2 H(+). The catalysed reaction is hydrogencarbonate + NH4(+) + 2 ATP = carbamoyl phosphate + 2 ADP + phosphate + 2 H(+). It participates in amino-acid biosynthesis; L-arginine biosynthesis; carbamoyl phosphate from bicarbonate: step 1/1. The protein operates within pyrimidine metabolism; UMP biosynthesis via de novo pathway; (S)-dihydroorotate from bicarbonate: step 1/3. Functionally, large subunit of the glutamine-dependent carbamoyl phosphate synthetase (CPSase). CPSase catalyzes the formation of carbamoyl phosphate from the ammonia moiety of glutamine, carbonate, and phosphate donated by ATP, constituting the first step of 2 biosynthetic pathways, one leading to arginine and/or urea and the other to pyrimidine nucleotides. The large subunit (synthetase) binds the substrates ammonia (free or transferred from glutamine from the small subunit), hydrogencarbonate and ATP and carries out an ATP-coupled ligase reaction, activating hydrogencarbonate by forming carboxy phosphate which reacts with ammonia to form carbamoyl phosphate. The sequence is that of Carbamoyl phosphate synthase large chain from Natranaerobius thermophilus (strain ATCC BAA-1301 / DSM 18059 / JW/NM-WN-LF).